The primary structure comprises 844 residues: SWI/SNF-related matrix-associated actin-dependent regulator of chromatin subfamily A containing DEAD/H box 1 homolog (844 aa).

The segment covering 1–23 (MSDSTVAASASASASSSAKSSLS) has biased composition (low complexity). Disordered stretches follow at residues 1–75 (MSDS…TKLE) and 121–180 (NCKP…STKM). Residues 30 to 42 (INKNASSVVASPS) are compositionally biased toward polar residues. One can recognise a Helicase ATP-binding domain in the interval 301 to 471 (TVMHKQEMNG…ISLLCFVMPK (171 aa)). Position 314–321 (314–321 (DEMGLGKT)) interacts with ATP. The short motif at 422–425 (DEAH) is the DEGH box element. The Helicase C-terminal domain maps to 656 to 818 (YLDTLLPKLK…EQRCVVKLLT (163 aa)). Phosphoserine is present on residues Ser-834, Ser-838, and Ser-841.

Belongs to the SNF2/RAD54 helicase family.

It is found in the nucleus. The catalysed reaction is ATP + H2O = ADP + phosphate + H(+). In terms of biological role, DNA helicase that possesses intrinsic ATP-dependent nucleosome-remodeling activity and is both required for DNA repair and heterochromatin organization. Promotes DNA end resection of double-strand breaks (DSBs) following DNA damage: probably acts by weakening histone DNA interactions in nucleosomes flanking DSBs. This Drosophila melanogaster (Fruit fly) protein is SWI/SNF-related matrix-associated actin-dependent regulator of chromatin subfamily A containing DEAD/H box 1 homolog (Etl1).